The following is a 110-amino-acid chain: UPF0060 membrane protein Noc_2955 (110 aa).

The next 4 membrane-spanning stretches (helical) occupy residues 7–27 (VGLFLITALAEIAGCYLAYLW), 33–53 (TIWLLVPCALSLVAFVWLLSL), 63–83 (AAYGGVYIVMAILWLWVVNGI), and 87–107 (TWDLVGSAIALLGMAIIMFAP).

This sequence belongs to the UPF0060 family.

It localises to the cell inner membrane. In Nitrosococcus oceani (strain ATCC 19707 / BCRC 17464 / JCM 30415 / NCIMB 11848 / C-107), this protein is UPF0060 membrane protein Noc_2955.